The primary structure comprises 107 residues: Guanine nucleotide-binding protein G(I)/G(S)/G(O) subunit gamma-14 (107 aa).

The region spanning 69–107 (KMAADLLKFCTEQAKNDPFLVGIPAATNSFKEKKPYAIL) is the G protein gamma domain.

Belongs to the G protein gamma family. As to quaternary structure, g proteins are composed of 3 units; alpha, beta and gamma.

It is found in the cell membrane. In terms of biological role, guanine nucleotide-binding proteins (G proteins) are involved as a modulator or transducer in various transmembrane signaling systems. The beta and gamma chains are required for the GTPase activity, for replacement of GDP by GTP, and for G protein-effector interaction. This chain is Guanine nucleotide-binding protein G(I)/G(S)/G(O) subunit gamma-14, found in Homo sapiens (Human).